The chain runs to 432 residues: Ribulose bisphosphate carboxylase-like protein 2 (432 aa).

Residues K198, D200, and E201 each contribute to the Mg(2+) site. Residue K198 is modified to N6-carboxylysine.

Belongs to the RuBisCO large chain family. Type IV subfamily. In terms of assembly, homodimer. Requires Mg(2+) as cofactor.

May be involved in sulfur metabolism and oxidative stress response. Does not show RuBisCO activity. The protein is Ribulose bisphosphate carboxylase-like protein 2 (rlp2) of Rhodopseudomonas palustris (strain ATCC BAA-98 / CGA009).